The chain runs to 275 residues: 2,3,4,5-tetrahydropyridine-2,6-dicarboxylate N-succinyltransferase (275 aa).

The substrate site is built by arginine 107 and aspartate 144.

It belongs to the transferase hexapeptide repeat family. As to quaternary structure, homotrimer.

Its subcellular location is the cytoplasm. It catalyses the reaction (S)-2,3,4,5-tetrahydrodipicolinate + succinyl-CoA + H2O = (S)-2-succinylamino-6-oxoheptanedioate + CoA. It functions in the pathway amino-acid biosynthesis; L-lysine biosynthesis via DAP pathway; LL-2,6-diaminopimelate from (S)-tetrahydrodipicolinate (succinylase route): step 1/3. The chain is 2,3,4,5-tetrahydropyridine-2,6-dicarboxylate N-succinyltransferase from Polynucleobacter asymbioticus (strain DSM 18221 / CIP 109841 / QLW-P1DMWA-1) (Polynucleobacter necessarius subsp. asymbioticus).